The following is a 118-amino-acid chain: Immunoglobulin heavy variable 4-30-2 (118 aa).

A signal peptide spans 1 to 19 (MKHLWFFLLLVAAPRWVLS). The tract at residues 20 to 44 (QLQLQESGSGLVKPSQTLSLTCAVS) is framework-1. Positions 20-118 (QLQLQESGSG…ADTAVYYCAR (99 aa)) constitute an Ig-like domain. The cysteines at positions 41 and 116 are disulfide-linked. The segment at 45-54 (GGSISSGGYS) is complementarity-determining-1. Residues 55–71 (WSWIRQPPGKGLEWIGY) are framework-2. The complementarity-determining-2 stretch occupies residues 72-78 (IYHSGST). The tract at residues 79-116 (YYNPSLKSRVTISVDRSKNQFSLKLSSVTAADTAVYYC) is framework-3. The tract at residues 117–118 (AR) is complementarity-determining-3.

As to quaternary structure, immunoglobulins are composed of two identical heavy chains and two identical light chains; disulfide-linked.

Its subcellular location is the secreted. It is found in the cell membrane. Functionally, v region of the variable domain of immunoglobulin heavy chains that participates in the antigen recognition. Immunoglobulins, also known as antibodies, are membrane-bound or secreted glycoproteins produced by B lymphocytes. In the recognition phase of humoral immunity, the membrane-bound immunoglobulins serve as receptors which, upon binding of a specific antigen, trigger the clonal expansion and differentiation of B lymphocytes into immunoglobulins-secreting plasma cells. Secreted immunoglobulins mediate the effector phase of humoral immunity, which results in the elimination of bound antigens. The antigen binding site is formed by the variable domain of one heavy chain, together with that of its associated light chain. Thus, each immunoglobulin has two antigen binding sites with remarkable affinity for a particular antigen. The variable domains are assembled by a process called V-(D)-J rearrangement and can then be subjected to somatic hypermutations which, after exposure to antigen and selection, allow affinity maturation for a particular antigen. In Homo sapiens (Human), this protein is Immunoglobulin heavy variable 4-30-2.